Here is a 555-residue protein sequence, read N- to C-terminus: Poly(A) polymerase PAPa (555 aa).

A disordered region spans residues 1–20; the sequence is MNNQAYGVTPPISVANSTPK. ATP is bound by residues 86-88, 99-101, Asp153, Lys214, Tyr223, and 232-233; these read FGS, DID, and GV. Residues Asp99, Asp101, and Asp153 each contribute to the Mg(2+) site. The segment at 532 to 555 is disordered; that stretch reads KRKRAVSKNEGKKKPKSVGTVSAA.

It belongs to the poly(A) polymerase family. The cofactor is Mg(2+). Mn(2+) is required as a cofactor.

The protein resides in the nucleus. The catalysed reaction is RNA(n) + ATP = RNA(n)-3'-adenine ribonucleotide + diphosphate. In terms of biological role, polymerase that creates the 3'-poly(A) tail of mRNA's. May acquire specificity through interaction with a cleavage and polyadenylation factor. This is Poly(A) polymerase PAPa (PAPA) from Candida albicans (strain SC5314 / ATCC MYA-2876) (Yeast).